A 127-amino-acid polypeptide reads, in one-letter code: Putative B3 domain-containing protein At4g12617 (127 aa).

Residues 35-127 constitute a DNA-binding region (TF-B3); it reads IMMPKTLLEA…HTRLNFKHVA (93 aa).

It is found in the nucleus. This Arabidopsis thaliana (Mouse-ear cress) protein is Putative B3 domain-containing protein At4g12617.